The sequence spans 346 residues: Endo-1,4-beta-xylanase B (346 aa).

The signal sequence occupies residues 1–19 (MKGLPALLLLLIGCVSSFG). The GH10 domain occupies 41 to 338 (GNNFWSLPDA…KPCYFAIREL (298 aa)). Glu153 serves as the catalytic Proton donor. Glu259 serves as the catalytic Nucleophile.

The protein belongs to the glycosyl hydrolase 10 (cellulase F) family.

The enzyme catalyses Endohydrolysis of (1-&gt;4)-beta-D-xylosidic linkages in xylans.. The protein is Endo-1,4-beta-xylanase B (xynB) of Thermotoga neapolitana.